Consider the following 153-residue polypeptide: Ribosomal RNA large subunit methyltransferase H (153 aa).

S-adenosyl-L-methionine-binding positions include leucine 70, glycine 102, and 121–126 (LSRMTF).

It belongs to the RNA methyltransferase RlmH family. In terms of assembly, homodimer.

Its subcellular location is the cytoplasm. The enzyme catalyses pseudouridine(1915) in 23S rRNA + S-adenosyl-L-methionine = N(3)-methylpseudouridine(1915) in 23S rRNA + S-adenosyl-L-homocysteine + H(+). Its function is as follows. Specifically methylates the pseudouridine at position 1915 (m3Psi1915) in 23S rRNA. The polypeptide is Ribosomal RNA large subunit methyltransferase H (Geotalea daltonii (strain DSM 22248 / JCM 15807 / FRC-32) (Geobacter daltonii)).